The following is a 340-amino-acid chain: Ribosomal RNA large subunit methyltransferase F (340 aa).

Residues 1–36 (MNAPRTPKPARKKPDSATPAKPVEPRKEASLHPRNR) form a disordered region.

The protein belongs to the methyltransferase superfamily. METTL16/RlmF family.

The protein localises to the cytoplasm. It catalyses the reaction adenosine(1618) in 23S rRNA + S-adenosyl-L-methionine = N(6)-methyladenosine(1618) in 23S rRNA + S-adenosyl-L-homocysteine + H(+). Functionally, specifically methylates the adenine in position 1618 of 23S rRNA. This chain is Ribosomal RNA large subunit methyltransferase F, found in Pseudomonas fluorescens (strain Pf0-1).